A 320-amino-acid polypeptide reads, in one-letter code: Protease HtpX homolog (320 aa).

The next 2 membrane-spanning stretches (helical) occupy residues threonine 6–glycine 26 and alanine 28–serine 48. Residue histidine 130 coordinates Zn(2+). The active site involves glutamate 131. Position 134 (histidine 134) interacts with Zn(2+). 2 helical membrane passes run isoleucine 145–glycine 165 and proline 173–valine 193. Residue glutamate 202 coordinates Zn(2+). The disordered stretch occupies residues glycine 281 to serine 320.

This sequence belongs to the peptidase M48B family. The cofactor is Zn(2+).

Its subcellular location is the cell inner membrane. The sequence is that of Protease HtpX homolog from Rhizobium leguminosarum bv. trifolii (strain WSM2304).